A 1189-amino-acid chain; its full sequence is Phosphinothricin tripeptide synthetase PhsB (1189 aa).

The Carrier 1 domain maps to 5-80 (QTDDVVTGRI…ALAKRIRASR (76 aa)). The residue at position 40 (Ser40) is an O-(pantetheine 4'-phosphoryl)serine. 2 disordered regions span residues 75-97 (RIRASRSTAPTASGPPRTAPVDS) and 454-476 (TPDRDGREPGEGPFAREESGGDT). Positions 100–541 (TAPLTFQQEP…VALLPLQEPA (442 aa)) are condensation. The segment covering 455–472 (PDRDGREPGEGPFAREES) has biased composition (basic and acidic residues). The interval 572–969 (AQAHRTPDAV…GREDGQVKLR (398 aa)) is adenylation. Residues 1045–1081 (DRVPLTPSGKTDRKALPDPAAGEQPRSGRGAAPGTPA) are disordered. The Carrier 2 domain maps to 1076–1151 (APGTPAEREL…DFALAVVTAQ (76 aa)). Ser1111 carries the O-(pantetheine 4'-phosphoryl)serine modification.

It belongs to the NRP synthetase family. Pantetheine 4'-phosphate serves as cofactor.

The catalysed reaction is holo-[peptidyl-carrier protein] + L-alanine + ATP = L-alanyl-[peptidyl-carrier protein] + AMP + diphosphate. The protein operates within secondary metabolite biosynthesis; bialaphos biosynthesis. In terms of biological role, involved in the biosynthesis of phosphinothricin tripeptide (PTT), also known as bialaphos (BA), a natural-product antibiotic and potent herbicide. Adenylates L-alanine and loads it onto a peptidyl carrier domain via a thioester linkage to the phosphopanthetheine moiety. Shows weaker activity with aminobutyric acid and L-serine. The protein is Phosphinothricin tripeptide synthetase PhsB of Streptomyces viridochromogenes (strain DSM 40736 / JCM 4977 / BCRC 1201 / Tue 494).